A 299-amino-acid polypeptide reads, in one-letter code: Peroxisomal biogenesis factor 19 (299 aa).

The interval 1–63 (MAAAEGDGGV…SPGDTAKDAL (63 aa)) is disordered. A2 is modified (N-acetylalanine). Residues 2–56 (AAAEGDGGVRAEADRELEELLESALDDFDKAKPSPAPPPTTTAPDASGPQKRSPG) are docking to the peroxisome membrane and binding to PEX3. Positions 2 to 91 (AAAEGDGGVR…QATAEFEKAM (90 aa)) are necessary for PEX19 function on peroxisome biogenesis. Acidic residues predominate over residues 16–27 (RELEELLESALD). Residues S35, S54, and S66 each carry the phosphoserine modification. T236 is subject to Phosphothreonine. C296 carries the cysteine methyl ester modification. The S-farnesyl cysteine moiety is linked to residue C296. Residues 297–299 (LIM) constitute a propeptide, removed in mature form.

It belongs to the peroxin-19 family. In terms of assembly, interacts with a broad range of peroxisomal membrane proteins, including PEX3, PEX10, PEX11A, PEX11B, PEX12, PEX13, PEX14 and PEX16, PXMP2/PMP22, PXMP4/PMP24, SLC25A17/PMP34, ABCD1/ALDP, ABCD2/ALDRP, and ABCD3/PMP70. Also interacts with the tumor suppressor CDKN2A/p19ARF.

Its subcellular location is the cytoplasm. It localises to the peroxisome membrane. Functionally, necessary for early peroxisomal biogenesis. Acts both as a cytosolic chaperone and as an import receptor for peroxisomal membrane proteins (PMPs). Binds and stabilizes newly synthesized PMPs in the cytoplasm by interacting with their hydrophobic membrane-spanning domains, and targets them to the peroxisome membrane by binding to the integral membrane protein PEX3. Excludes CDKN2A from the nucleus and prevents its interaction with MDM2, which results in active degradation of TP53. This Bos taurus (Bovine) protein is Peroxisomal biogenesis factor 19 (PEX19).